We begin with the raw amino-acid sequence, 539 residues long: MTLRSKMTKYIFVTGGVVSGLGKGVSAASIGNLLKHRGFKIFVLKLDPYLNIDPGVMSPYEHGEVYVTADGGETDLDLGHYERFIDVELSKDSNYTSGKIFSNLFTQERNGNFLGKTVQLIPHFTNEILNTIEKIATKHKPDFMIVEIGGTIGDIESNSFIYAMAELALAKPDRFFLVHVTYVIFLEASNEFKSKPTQVSINSLRSFGISPNLVLLRNSKMVPDNIVEKIAKKSVLNKDYVISVPDMKNIYEAPLYFESQNIAQIILSHFKIKDIEPDLSKWNKLVDSIKKPKAYKAKILMVGKYVEFLDAYKSIIEAFKVSSYEENIDLKMDWVDSSKLELTNLDEFLKGYDGVVILPGFGIRGWEQKVRIAQYTRENKIPTFGICLGFQAMSVAHARMKGIKNANSREFANDKNDETYILDLIQGKAKDKNLGGTLRLGNYTTTIKENTLAKKIYQKDQVIERHRHRYEINSKYIDLLEDEEFVFSGIWNEGKLAEICEVKNHPFYLGVQYHPEFTSRPLKPNPLFTSFLRVLIKNN.

The amidoligase domain stretch occupies residues 1–272 (MTLRSKMTKY…AQIILSHFKI (272 aa)). Ser-19 contacts CTP. Ser-19 serves as a coordination point for UTP. 20 to 25 (GLGKGV) contributes to the ATP binding site. Tyr-60 is an L-glutamine binding site. Asp-77 is an ATP binding site. Asp-77 and Glu-147 together coordinate Mg(2+). CTP-binding positions include 154 to 156 (DIE), 193 to 198 (KSKPTQ), and Lys-229. UTP is bound by residues 193 to 198 (KSKPTQ) and Lys-229. Residues 298–539 (KILMVGKYVE…SFLRVLIKNN (242 aa)) form the Glutamine amidotransferase type-1 domain. L-glutamine is bound at residue Gly-360. Cys-387 acts as the Nucleophile; for glutamine hydrolysis in catalysis. L-glutamine-binding positions include 388 to 391 (LGFQ), Glu-410, and Arg-469. Residues His-514 and Glu-516 contribute to the active site.

Belongs to the CTP synthase family. In terms of assembly, homotetramer.

The enzyme catalyses UTP + L-glutamine + ATP + H2O = CTP + L-glutamate + ADP + phosphate + 2 H(+). The catalysed reaction is L-glutamine + H2O = L-glutamate + NH4(+). It carries out the reaction UTP + NH4(+) + ATP = CTP + ADP + phosphate + 2 H(+). The protein operates within pyrimidine metabolism; CTP biosynthesis via de novo pathway; CTP from UDP: step 2/2. Allosterically activated by GTP, when glutamine is the substrate; GTP has no effect on the reaction when ammonia is the substrate. The allosteric effector GTP functions by stabilizing the protein conformation that binds the tetrahedral intermediate(s) formed during glutamine hydrolysis. Inhibited by the product CTP, via allosteric rather than competitive inhibition. Its function is as follows. Catalyzes the ATP-dependent amination of UTP to CTP with either L-glutamine or ammonia as the source of nitrogen. Regulates intracellular CTP levels through interactions with the four ribonucleotide triphosphates. The protein is CTP synthase of Mycoplasmopsis pulmonis (strain UAB CTIP) (Mycoplasma pulmonis).